We begin with the raw amino-acid sequence, 556 residues long: Dihydroxy-acid dehydratase (556 aa).

C47 lines the [2Fe-2S] cluster pocket. Position 79 (D79) interacts with Mg(2+). Residue C120 participates in [2Fe-2S] cluster binding. Mg(2+) contacts are provided by D121 and K122. Residue K122 is modified to N6-carboxylysine. C192 is a [2Fe-2S] cluster binding site. E444 is a Mg(2+) binding site. Residue S470 is the Proton acceptor of the active site.

Belongs to the IlvD/Edd family. As to quaternary structure, homodimer. [2Fe-2S] cluster is required as a cofactor. Mg(2+) serves as cofactor.

It carries out the reaction (2R)-2,3-dihydroxy-3-methylbutanoate = 3-methyl-2-oxobutanoate + H2O. The enzyme catalyses (2R,3R)-2,3-dihydroxy-3-methylpentanoate = (S)-3-methyl-2-oxopentanoate + H2O. It participates in amino-acid biosynthesis; L-isoleucine biosynthesis; L-isoleucine from 2-oxobutanoate: step 3/4. Its pathway is amino-acid biosynthesis; L-valine biosynthesis; L-valine from pyruvate: step 3/4. Functions in the biosynthesis of branched-chain amino acids. Catalyzes the dehydration of (2R,3R)-2,3-dihydroxy-3-methylpentanoate (2,3-dihydroxy-3-methylvalerate) into 2-oxo-3-methylpentanoate (2-oxo-3-methylvalerate) and of (2R)-2,3-dihydroxy-3-methylbutanoate (2,3-dihydroxyisovalerate) into 2-oxo-3-methylbutanoate (2-oxoisovalerate), the penultimate precursor to L-isoleucine and L-valine, respectively. The sequence is that of Dihydroxy-acid dehydratase from Prochlorococcus marinus (strain MIT 9211).